Reading from the N-terminus, the 1211-residue chain is PH domain-containing protein DDB_G0287875 (1211 aa).

The region spanning 5-90 (QKKILKVFDQ…YKFFFLNPNG (86 aa)) is the Ras-associating 1 domain. Residues 103–112 (KSQSASTSGS) show a composition bias toward polar residues. The tract at residues 103 to 133 (KSQSASTSGSAPPKKEPPKPQELQQKQHISK) is disordered. Residues 132–223 (SKGKSGWLLR…WAQELQATMN (92 aa)) form the PH domain. Calponin-homology (CH) domains are found at residues 277 to 384 (TTLV…VGYF) and 392 to 502 (FNMR…LSGQ). Disordered regions lie at residues 520 to 941 (VEPE…TESV) and 973 to 1110 (TSAT…PKNT). The stretch at 527–572 (SIRDKQLKLMREKKEEEDRLKKEKEEKEKEEKEKLEKESSAAAAAT) forms a coiled coil. Basic and acidic residues predominate over residues 528-565 (IRDKQLKLMREKKEEEDRLKKEKEEKEKEEKEKLEKES). Low complexity-rich tracts occupy residues 566 to 596 (SAAA…PLKK), 607 to 646 (PPTV…TLTP), 655 to 668 (KKPA…KPVA), and 676 to 691 (PSSS…TTPS). Residues 703 to 729 (QLEKEKQDRLEKARLEKEKAEKEEQEF) are compositionally biased toward basic and acidic residues. Positions 703–847 (QLEKEKQDRL…ERKHDENDMD (145 aa)) form a coiled coil. Low complexity predominate over residues 744-753 (LLEQQKQQQE). Composition is skewed to basic and acidic residues over residues 754-778 (GQER…QRQI) and 786-853 (EARI…KLLE). Polar residues predominate over residues 862–877 (PTITPPQSLHSSQIIR). A coiled-coil region spans residues 880–909 (IEEDDQTNSELEMFQNEYNRLQDEEEHINS). Composition is skewed to low complexity over residues 914–936 (GSSG…GASS) and 976–1010 (TTSD…TNNN). A compositionally biased stretch (polar residues) spans 1032-1048 (TKEQQSIIDKQTGLVSK). The stretch at 1048–1076 (KQSTNNESNEQQQQQQQQQQLQQQQSSQN) forms a coiled coil. Residues 1049 to 1083 (QSTNNESNEQQQQQQQQQQLQQQQSSQNSTTSIST) are compositionally biased toward low complexity. A compositionally biased stretch (basic and acidic residues) spans 1093–1104 (NEEKEKESEPHK). The 85-residue stretch at 1112-1196 (GRVVVRICLE…DRFVFKKNDI (85 aa)) folds into the Ras-associating 2 domain.

The sequence is that of PH domain-containing protein DDB_G0287875 from Dictyostelium discoideum (Social amoeba).